We begin with the raw amino-acid sequence, 210 residues long: Superoxide dismutase [Mn], mitochondrial (210 aa).

Mn(2+)-binding residues include His29, His77, Asp164, and His168.

It belongs to the iron/manganese superoxide dismutase family. Homotetramer. Mn(2+) serves as cofactor.

It is found in the mitochondrion matrix. The catalysed reaction is 2 superoxide + 2 H(+) = H2O2 + O2. Functionally, destroys superoxide anion radicals which are normally produced within the cells and which are toxic to biological systems. The sequence is that of Superoxide dismutase [Mn], mitochondrial (sodB) from Aspergillus niger.